The primary structure comprises 309 residues: Homoserine O-succinyltransferase (309 aa).

Cys-142 serves as the catalytic Acyl-thioester intermediate. Substrate is bound by residues Lys-163 and Ser-192. The Proton acceptor role is filled by His-235. Residue Glu-237 is part of the active site. Substrate is bound at residue Arg-249.

The protein belongs to the MetA family.

Its subcellular location is the cytoplasm. It carries out the reaction L-homoserine + succinyl-CoA = O-succinyl-L-homoserine + CoA. Its pathway is amino-acid biosynthesis; L-methionine biosynthesis via de novo pathway; O-succinyl-L-homoserine from L-homoserine: step 1/1. Functionally, transfers a succinyl group from succinyl-CoA to L-homoserine, forming succinyl-L-homoserine. This is Homoserine O-succinyltransferase from Proteus mirabilis (strain HI4320).